Consider the following 314-residue polypeptide: tRNA-cytidine(32) 2-sulfurtransferase (314 aa).

The PP-loop motif signature appears at 49-54 (SGGKDS). [4Fe-4S] cluster contacts are provided by C124, C127, and C215.

The protein belongs to the TtcA family. Homodimer. Requires Mg(2+) as cofactor. [4Fe-4S] cluster is required as a cofactor.

It localises to the cytoplasm. It carries out the reaction cytidine(32) in tRNA + S-sulfanyl-L-cysteinyl-[cysteine desulfurase] + AH2 + ATP = 2-thiocytidine(32) in tRNA + L-cysteinyl-[cysteine desulfurase] + A + AMP + diphosphate + H(+). It functions in the pathway tRNA modification. Catalyzes the ATP-dependent 2-thiolation of cytidine in position 32 of tRNA, to form 2-thiocytidine (s(2)C32). The sulfur atoms are provided by the cysteine/cysteine desulfurase (IscS) system. The sequence is that of tRNA-cytidine(32) 2-sulfurtransferase from Histophilus somni (strain 129Pt) (Haemophilus somnus).